The sequence spans 362 residues: Tryptophan 2,3-dioxygenase (362 aa).

Substrate is bound by residues 40 to 44 (FIIVH) and Arg111. His297 is a heme binding site. A substrate-binding site is contributed by Thr311.

The protein belongs to the tryptophan 2,3-dioxygenase family. In terms of assembly, homotetramer. Heme is required as a cofactor.

It catalyses the reaction L-tryptophan + O2 = N-formyl-L-kynurenine. Its pathway is amino-acid degradation; L-tryptophan degradation via kynurenine pathway; L-kynurenine from L-tryptophan: step 1/2. In terms of biological role, heme-dependent dioxygenase that catalyzes the oxidative cleavage of the L-tryptophan (L-Trp) pyrrole ring and converts L-tryptophan to N-formyl-L-kynurenine. Catalyzes the oxidative cleavage of the indole moiety. This is Tryptophan 2,3-dioxygenase from Alteromonas mediterranea (strain DSM 17117 / CIP 110805 / LMG 28347 / Deep ecotype).